Here is a 505-residue protein sequence, read N- to C-terminus: Formate--tetrahydrofolate ligase (505 aa).

The protein belongs to the formate--tetrahydrofolate ligase family.

It carries out the reaction (6S)-5,6,7,8-tetrahydrofolate + formate + ATP = (6R)-10-formyltetrahydrofolate + ADP + phosphate. The protein operates within one-carbon metabolism; tetrahydrofolate interconversion. The chain is Formate--tetrahydrofolate ligase (fhs) from Bifidobacterium longum (strain NCC 2705).